Consider the following 290-residue polypeptide: MSNRLFFIKKCYNLAQLMRINQPIGFFLLLWPTLWGLWLSHKGIPDKVVLIVFVAGALCMRSAGCIINDYVDYDIDGHVQRTKTRPLPSGMIRKKEALVALSILLFIAFILVLSLNFITIFLSVVALILSWIYPYLKRYIYFPQVMLGLLFSWPILMAFTAINNPINSTAWLLFLMNTVWTIVYDTQYAMIDREDDIYVGIKSSAVLFGDMDKFLIGILQLCIVFILGIIGWKERFTVVFYFFSLFGVIILFMWQQILINKRKRIRYFQAFLSNNYVGMLVFIGIASSFH.

8 helical membrane passes run 24 to 44 (IGFF…HKGI), 48 to 68 (VVLI…CIIN), 98 to 118 (LVAL…LNFI), 142 to 162 (FPQV…FTAI), 171 to 191 (WLLF…YAMI), 214 to 234 (FLIG…GWKE), 239 to 259 (VFYF…QILI), and 270 to 290 (AFLS…SSFH).

It belongs to the UbiA prenyltransferase family. Mg(2+) serves as cofactor.

The protein resides in the cell inner membrane. The catalysed reaction is all-trans-octaprenyl diphosphate + 4-hydroxybenzoate = 4-hydroxy-3-(all-trans-octaprenyl)benzoate + diphosphate. It functions in the pathway cofactor biosynthesis; ubiquinone biosynthesis. In terms of biological role, catalyzes the prenylation of para-hydroxybenzoate (PHB) with an all-trans polyprenyl group. Mediates the second step in the final reaction sequence of ubiquinone-8 (UQ-8) biosynthesis, which is the condensation of the polyisoprenoid side chain with PHB, generating the first membrane-bound Q intermediate 3-octaprenyl-4-hydroxybenzoate. The sequence is that of 4-hydroxybenzoate octaprenyltransferase from Blochmanniella pennsylvanica (strain BPEN).